A 656-amino-acid polypeptide reads, in one-letter code: Macrolide export ATP-binding/permease protein MacB (656 aa).

In terms of domain architecture, ABC transporter spans 6 to 244 (LEVSACYRSF…VKAQVDMSLA (239 aa)). 42-49 (GASGSGKS) contacts ATP. The next 4 membrane-spanning stretches (helical) occupy residues 277–297 (FLTM…VALG), 531–551 (LLIS…VMNI), 586–606 (LVCL…GVVF), and 621–641 (SIVA…FLPA).

It belongs to the ABC transporter superfamily. Macrolide exporter (TC 3.A.1.122) family. As to quaternary structure, homodimer. Part of the tripartite efflux system MacAB-TolC, which is composed of an inner membrane transporter, MacB, a periplasmic membrane fusion protein, MacA, and an outer membrane component, TolC. The complex forms a large protein conduit and can translocate molecules across both the inner and outer membranes. Interacts with MacA.

It localises to the cell inner membrane. Functionally, part of the tripartite efflux system MacAB-TolC. MacB is a non-canonical ABC transporter that contains transmembrane domains (TMD), which form a pore in the inner membrane, and an ATP-binding domain (NBD), which is responsible for energy generation. Confers resistance against macrolides. The protein is Macrolide export ATP-binding/permease protein MacB of Shewanella oneidensis (strain ATCC 700550 / JCM 31522 / CIP 106686 / LMG 19005 / NCIMB 14063 / MR-1).